Here is a 141-residue protein sequence, read N- to C-terminus: Hemoglobin subunit alpha (141 aa).

The Globin domain occupies Val-1–Arg-141. The residue at position 3 (Ser-3) is a Phosphoserine. An N6-succinyllysine modification is found at Lys-7. Position 8 is a phosphothreonine (Thr-8). An N6-succinyllysine modification is found at Lys-11. Lys-16 is subject to N6-acetyllysine; alternate. Lys-16 bears the N6-succinyllysine; alternate mark. Tyr-24 bears the Phosphotyrosine mark. Position 35 is a phosphoserine (Ser-35). Residue Lys-40 is modified to N6-succinyllysine. Phosphoserine is present on Ser-49. His-58 lines the O2 pocket. Residue His-87 coordinates heme b. Ser-102 carries the phosphoserine modification. Phosphothreonine is present on Thr-108. The residue at position 124 (Ser-124) is a Phosphoserine. Phosphothreonine is present on residues Thr-134 and Thr-137. Ser-138 is subject to Phosphoserine.

This sequence belongs to the globin family. In terms of assembly, heterotetramer of two alpha chains and two beta chains. In terms of tissue distribution, red blood cells.

Its function is as follows. Involved in oxygen transport from the lung to the various peripheral tissues. Functionally, hemopressin acts as an antagonist peptide of the cannabinoid receptor CNR1. Hemopressin-binding efficiently blocks cannabinoid receptor CNR1 and subsequent signaling. The chain is Hemoglobin subunit alpha (HBA) from Pteronura brasiliensis (Giant otter).